The sequence spans 195 residues: Guanylate kinase (195 aa).

Residues 10 to 189 form the Guanylate kinase-like domain; sequence GRLIVFSAPS…TVDAVATRIA (180 aa). 17–24 provides a ligand contact to ATP; that stretch reads APSGTGKS.

This sequence belongs to the guanylate kinase family.

Its subcellular location is the cytoplasm. It catalyses the reaction GMP + ATP = GDP + ADP. Functionally, essential for recycling GMP and indirectly, cGMP. In Chlorobaculum tepidum (strain ATCC 49652 / DSM 12025 / NBRC 103806 / TLS) (Chlorobium tepidum), this protein is Guanylate kinase.